Consider the following 79-residue polypeptide: Beta-defensin 15 (79 aa).

Residues 1 to 20 (MKTFLFLFAVFFFLDPAKNA) form the signal peptide. Disulfide bonds link cysteine 26–cysteine 53, cysteine 33–cysteine 47, and cysteine 37–cysteine 54.

The protein belongs to the beta-defensin family.

Its subcellular location is the secreted. In terms of biological role, has antibacterial activity. This chain is Beta-defensin 15 (Defb15), found in Rattus norvegicus (Rat).